Consider the following 749-residue polypeptide: MAGVPAPASQLTKVLAGLRHTFVVADATLPDCPLVYASEGFYAMTGYGPDEVLGHNCRFLQGEGTDPKEVQKIRDAIKKGEACSVRLLNYRKDGTPFWNLLTVTPIKTPDGRVSKFVGVQVDVTSKTEGKALADNSGVPLLVKYDHRLRDNVARTIVDDVTIAVEKAEGVEPGQASAVAAAAPLGAKGPRGTAPKSFPRVALDLATTVERIQQNFCISDPTLPDCPIVFASDAFLELTGYSREEVLGRNCRFLQGAGTDRGTVDQIRAAIKEGSELTVRILNYTKAGKAFWNMFTLAPMRDQDGHARFFVGVQVDVTAQSTSPDKAPVWNKTPEEEVAKAKMGAEAASLISSALQGMAAPTTANPWAAISGVIMRRKPHKADDKAYQALLQLQERDGKMKLMHFRRVKQLGAGDVGLVDLVQLQGSELKFAMKTLDKFEMQERNKVARVLTESAILAAVDHPFLATLYCTIQTDTHLHFVMEYCDGGELYGLLNSQPKKRLKEEHVRFYASEVLTALQYLHLLGYVYRDLKPENILLHHTGHVLLTDFDLSYSKGSTTPRIEKIGGAGAAGGSAPKSPKKSSSKSGGSSSGSALQLENYLLLAEPSARANSFVGTEEYLAPEVINAAGHGPAVDWWSLGILIFELLYGTTPFRGARRDETFENIIKSPLKFPSKPAVSEECRDLIEKLLVKDVGARLGSRTGANEIKSHPWFKGINWALLRHQQPPYVPRRASKAAGGSSTGGAAFDNY.

Positions 7 to 80 constitute a PAS 1 domain; the sequence is PASQLTKVLA…QKIRDAIKKG (74 aa). FMN is bound by residues 56 to 61, arginine 74, asparagine 89, asparagine 99, and glutamine 120; that span reads NCRFLQ. Position 57 is an S-4a-FMN cysteine (cysteine 57). The 55-residue stretch at 81–135 folds into the PAC 1 domain; that stretch reads EACSVRLLNYRKDGTPFWNLLTVTPIKTPDGRVSKFVGVQVDVTSKTEGKALADN. Positions 200–273 constitute a PAS 2 domain; it reads VALDLATTVE…DQIRAAIKEG (74 aa). Residues 274 to 328 form the PAC 2 domain; the sequence is SELTVRILNYTKAGKAFWNMFTLAPMRDQDGHARFFVGVQVDVTAQSTSPDKAPV. The region spanning 404-712 is the Protein kinase domain; sequence FRRVKQLGAG…ANEIKSHPWF (309 aa). ATP is bound by residues 410–418 and lysine 433; that span reads LGAGDVGLV. Catalysis depends on aspartate 529, which acts as the Proton acceptor. Disordered stretches follow at residues 563–591 and 729–749; these read KIGG…SSSG and PRRA…FDNY. The AGC-kinase C-terminal domain occupies 713–749; that stretch reads KGINWALLRHQQPPYVPRRASKAAGGSSTGGAAFDNY. Low complexity predominate over residues 734 to 749; it reads KAAGGSSTGGAAFDNY.

It belongs to the protein kinase superfamily. AGC Ser/Thr protein kinase family. FMN serves as cofactor. Autophosphorylated in response to blue light irradiation. In terms of processing, 2 molecules of FMN bind covalently to cysteines after exposure to blue light and are reversed in the dark. As to expression, expressed in gametes, pre-gametes and gametes generated by pre-gametes (at protein level).

The protein resides in the membrane. The catalysed reaction is L-seryl-[protein] + ATP = O-phospho-L-seryl-[protein] + ADP + H(+). The enzyme catalyses L-threonyl-[protein] + ATP = O-phospho-L-threonyl-[protein] + ADP + H(+). Functionally, protein kinase that acts as a blue light photoreceptor. Required for non-photochemical quenching (NPQ), a mechanism that converts and dissipates the harmful excess absorbed light energy into heat and protect the photosynthetic apparatus from photo-oxidative damage. Controls the energy-dependent chlorophyll fluorescence quenching (qE) activity of chlorophyll excited states by inducing the expression of the qE effector protein LHCSR3 in high light intensities. This chain is Phototropin, found in Chlamydomonas reinhardtii (Chlamydomonas smithii).